The sequence spans 168 residues: Pleiotrophin (168 aa).

The first 32 residues, 1–32 (MSSQQYQQQRRKFAAAFLALIFILAAVDTAEA), serve as a signal peptide directing secretion. 5 disulfides stabilise this stretch: C47–C76, C55–C85, C62–C89, C99–C131, and C109–C141. Chondroitin sulfate binding stretches follow at residues 92-99 (KKQFGAEC) and 123-131 (KRALHNADC). The tract at residues 139–168 (KPCGKLTKPKPQAESKKKKKEGKKQEKMLD) is disordered. The interval 147–168 (PKPQAESKKKKKEGKKQEKMLD) is chondroitin sulfate A binding.

It belongs to the pleiotrophin family. In terms of assembly, interacts with ALK and NEK6. Interacts with PTPRZ1 (via chondroitin sulfate groups); promotes formation of homooligomers; oligomerization impairs tyrosine phosphatase activity. Forms a complex with PTPRZ1 and CTNNB1; this complex inactivates PTPRZ1 protein tyrosine phosphatase activity through PTN interaction and stimulates tyrosine phosphorylation of CTNNB1. Interacts with ITGB3 and ITGA5. Forms a complex with PTPRZ1 and integrin alpha-V/beta-3 (ITGAV:ITGB3) that stimulates endothelial cell migration through ITGB3 'Tyr-773' phosphorylation. Interacts with SDC3 (via heparan sulfate chains); this interaction mediates the neurite outgrowth-promoting signal from PTN to the cytoskeleton of growing neurites; this interaction mediates osteoblast recruitment. Interacts with GPC2 (via heparan sulfate); this interaction promotes neurite outgrowth through binding of PTN with chondroitin sulfate of proteoglycans, thereby releasing PTPRS of chondroitin sulfate proteoglycans (CSPGs) and leading to binding with heparan sulfate of GPC2. In terms of processing, phosphorylated by NEK6. In terms of tissue distribution, osteoblast and brain. Expressed in the follicular epithelium and granulosa cells of the ovary. Strongly expressed in the uterus of newborn mice, and the degree of expression decreased in one-week-old mice, although the expression continues even in the uteri of adult mice. Expression gradually increases from proestrus to estrus, then decreases sharply, and thereafter gradually increased again. strongly expressed in the cochlea of WT mice 1 week after birth, and then the expression decreased and was undetectable by week 8 after birth. Expressed around the cell soma of osteocytes and apparently captured in the unmineralized interstitial matrix surrounding the cells. Furthermore distributed throughout the intraosseous canalicular porosity, being localized in the unmineralized matrix around the cell processes. Strongly expressed in the innermost layer of the periosteum.

The protein localises to the secreted. Its function is as follows. Secreted growth factor that mediates its signal through cell-surface proteoglycan and non-proteoglycan receptors. Binds cell-surface proteoglycan receptor via their chondroitin sulfate (CS) groups. Thereby regulates many processes like cell proliferation, cell survival, cell growth, cell differentiation and cell migration in several tissues namely neuron and bone. Also plays a role in synaptic plasticity and learning-related behavior by inhibiting long-term synaptic potentiation. Binds PTPRZ1, leading to neutralization of the negative charges of the CS chains of PTPRZ1, inducing PTPRZ1 clustering, thereby causing the dimerization and inactivation of its phosphatase activity leading to increased tyrosine phosphorylation of each of the PTPRZ1 substrates like ALK or AFAP1L2 in order to activate the PI3K-AKT pathway. Through PTPRZ1 binding controls oligodendrocyte precursor cell differentiation by enhancing the phosphorylation of AFAP1L2 in order to activate the PI3K-AKT pathway. Forms a complex with PTPRZ1 and integrin alpha-V/beta-3 (ITGAV:ITGB3) that stimulates endothelial cell migration through SRC dephosphorylation and activation that consequently leads to ITGB3 'Tyr-773' phosphorylation. In adult hippocampus promotes dendritic arborization, spine development, and functional integration and connectivity of newborn granule neurons through ALK by activating AKT signaling pathway. Binds GPC2 and chondroitin sulfate proteoglycans (CSPGs) at the neuron surface, leading to abrogation of binding between PTPRS and CSPGs and neurite outgrowth promotion. Binds SDC3 and mediates bone formation by recruiting and attaching osteoblasts/osteoblast precursors to the sites for new bone deposition. Binds ALK and promotes cell survival and cell proliferation through MAPK pathway activation. Inhibits proliferation and enhances differentiation of neural stem cells by inhibiting FGF2-induced fibroblast growth factor receptor signaling pathway. Mediates regulatory mechanisms in normal hemostasis and in hematopoietic regeneration and in maintaining the balance of myeloid and lymphoid regeneration. In addition may play a role in the female reproductive system, auditory response and the progesterone-induced decidualization pathway. The polypeptide is Pleiotrophin (Mus musculus (Mouse)).